The sequence spans 273 residues: NH(3)-dependent NAD(+) synthetase (273 aa).

ATP is bound at residue 47–54 (GISGGQDS). Aspartate 53 contributes to the Mg(2+) binding site. Arginine 139 is a binding site for deamido-NAD(+). Threonine 159 provides a ligand contact to ATP. Glutamate 164 is a Mg(2+) binding site. The deamido-NAD(+) site is built by lysine 172 and aspartate 179. The ATP site is built by lysine 188 and threonine 210. 259-260 (HK) serves as a coordination point for deamido-NAD(+).

Belongs to the NAD synthetase family. Homodimer.

It carries out the reaction deamido-NAD(+) + NH4(+) + ATP = AMP + diphosphate + NAD(+) + H(+). It participates in cofactor biosynthesis; NAD(+) biosynthesis; NAD(+) from deamido-NAD(+) (ammonia route): step 1/1. Its function is as follows. Catalyzes the ATP-dependent amidation of deamido-NAD to form NAD. Uses ammonia as a nitrogen source. This Staphylococcus saprophyticus subsp. saprophyticus (strain ATCC 15305 / DSM 20229 / NCIMB 8711 / NCTC 7292 / S-41) protein is NH(3)-dependent NAD(+) synthetase.